Here is a 94-residue protein sequence, read N- to C-terminus: Pyrimidine/purine nucleoside phosphorylase (94 aa).

Belongs to the nucleoside phosphorylase PpnP family.

It catalyses the reaction a purine D-ribonucleoside + phosphate = a purine nucleobase + alpha-D-ribose 1-phosphate. The enzyme catalyses adenosine + phosphate = alpha-D-ribose 1-phosphate + adenine. It carries out the reaction cytidine + phosphate = cytosine + alpha-D-ribose 1-phosphate. The catalysed reaction is guanosine + phosphate = alpha-D-ribose 1-phosphate + guanine. It catalyses the reaction inosine + phosphate = alpha-D-ribose 1-phosphate + hypoxanthine. The enzyme catalyses thymidine + phosphate = 2-deoxy-alpha-D-ribose 1-phosphate + thymine. It carries out the reaction uridine + phosphate = alpha-D-ribose 1-phosphate + uracil. The catalysed reaction is xanthosine + phosphate = alpha-D-ribose 1-phosphate + xanthine. In terms of biological role, catalyzes the phosphorolysis of diverse nucleosides, yielding D-ribose 1-phosphate and the respective free bases. Can use uridine, adenosine, guanosine, cytidine, thymidine, inosine and xanthosine as substrates. Also catalyzes the reverse reactions. The chain is Pyrimidine/purine nucleoside phosphorylase from Cronobacter sakazakii (strain ATCC BAA-894) (Enterobacter sakazakii).